The primary structure comprises 421 residues: Glutamate-1-semialdehyde 2,1-aminomutase 1 (421 aa).

The residue at position 258 (lysine 258) is an N6-(pyridoxal phosphate)lysine.

It belongs to the class-III pyridoxal-phosphate-dependent aminotransferase family. HemL subfamily. Pyridoxal 5'-phosphate is required as a cofactor.

The protein resides in the cytoplasm. The enzyme catalyses (S)-4-amino-5-oxopentanoate = 5-aminolevulinate. It functions in the pathway porphyrin-containing compound metabolism; protoporphyrin-IX biosynthesis; 5-aminolevulinate from L-glutamyl-tRNA(Glu): step 2/2. The polypeptide is Glutamate-1-semialdehyde 2,1-aminomutase 1 (Cenarchaeum symbiosum (strain A)).